The sequence spans 470 residues: Probable V-type proton ATPase subunit H 2 (470 aa).

Belongs to the V-ATPase H subunit family. V-ATPase is a heteromultimeric enzyme made up of two complexes: the ATP-hydrolytic V1 complex and the proton translocation V0 complex. The V1 complex consists of three catalytic AB heterodimers that form a heterohexamer, three peripheral stalks each consisting of EG heterodimers, one central rotor including subunits D and F, and the regulatory subunits C and H. The proton translocation complex V0 consists of the proton transport subunit a, a ring of proteolipid subunits c9c'', rotary subunit d, subunits e and f, and the accessory subunits vah-19/Ac45 and vah-20/PRR.

In terms of biological role, subunit of the V1 complex of vacuolar(H+)-ATPase (V-ATPase), a multisubunit enzyme composed of a peripheral complex (V1) that hydrolyzes ATP and a membrane integral complex (V0) that translocates protons. V-ATPase is responsible for acidifying and maintaining the pH of intracellular compartments and in some cell types, is targeted to the plasma membrane, where it is responsible for acidifying the extracellular environment. Subunit H is essential for V-ATPase activity, but not for the assembly of the complex. The protein is Probable V-type proton ATPase subunit H 2 of Caenorhabditis elegans.